The following is a 124-amino-acid chain: Small ribosomal subunit protein bS6 (124 aa).

Residues 99–124 (PLPAPRIVPGSEPEPVEQQEAAAVEA) form a disordered region. Positions 114-124 (VEQQEAAAVEA) are enriched in low complexity.

Belongs to the bacterial ribosomal protein bS6 family.

In terms of biological role, binds together with bS18 to 16S ribosomal RNA. The chain is Small ribosomal subunit protein bS6 from Prochlorococcus marinus (strain MIT 9303).